The sequence spans 211 residues: ATP-dependent Clp protease proteolytic subunit (211 aa).

Catalysis depends on serine 106, which acts as the Nucleophile. Histidine 131 is a catalytic residue.

Belongs to the peptidase S14 family. In terms of assembly, fourteen ClpP subunits assemble into 2 heptameric rings which stack back to back to give a disk-like structure with a central cavity, resembling the structure of eukaryotic proteasomes.

The protein resides in the cytoplasm. It catalyses the reaction Hydrolysis of proteins to small peptides in the presence of ATP and magnesium. alpha-casein is the usual test substrate. In the absence of ATP, only oligopeptides shorter than five residues are hydrolyzed (such as succinyl-Leu-Tyr-|-NHMec, and Leu-Tyr-Leu-|-Tyr-Trp, in which cleavage of the -Tyr-|-Leu- and -Tyr-|-Trp bonds also occurs).. In terms of biological role, cleaves peptides in various proteins in a process that requires ATP hydrolysis. Has a chymotrypsin-like activity. Plays a major role in the degradation of misfolded proteins. The polypeptide is ATP-dependent Clp protease proteolytic subunit (Rhodopseudomonas palustris (strain BisA53)).